We begin with the raw amino-acid sequence, 223 residues long: Thiamine-phosphate synthase (223 aa).

Residues 42–46 (QLRDK) and asparagine 83 contribute to the 4-amino-2-methyl-5-(diphosphooxymethyl)pyrimidine site. 2 residues coordinate Mg(2+): aspartate 84 and aspartate 103. Serine 122 is a 4-amino-2-methyl-5-(diphosphooxymethyl)pyrimidine binding site. 148 to 150 (TPT) is a binding site for 2-[(2R,5Z)-2-carboxy-4-methylthiazol-5(2H)-ylidene]ethyl phosphate. Lysine 151 serves as a coordination point for 4-amino-2-methyl-5-(diphosphooxymethyl)pyrimidine. Residue glycine 179 participates in 2-[(2R,5Z)-2-carboxy-4-methylthiazol-5(2H)-ylidene]ethyl phosphate binding.

This sequence belongs to the thiamine-phosphate synthase family. Mg(2+) is required as a cofactor.

It carries out the reaction 2-[(2R,5Z)-2-carboxy-4-methylthiazol-5(2H)-ylidene]ethyl phosphate + 4-amino-2-methyl-5-(diphosphooxymethyl)pyrimidine + 2 H(+) = thiamine phosphate + CO2 + diphosphate. The catalysed reaction is 2-(2-carboxy-4-methylthiazol-5-yl)ethyl phosphate + 4-amino-2-methyl-5-(diphosphooxymethyl)pyrimidine + 2 H(+) = thiamine phosphate + CO2 + diphosphate. It catalyses the reaction 4-methyl-5-(2-phosphooxyethyl)-thiazole + 4-amino-2-methyl-5-(diphosphooxymethyl)pyrimidine + H(+) = thiamine phosphate + diphosphate. It functions in the pathway cofactor biosynthesis; thiamine diphosphate biosynthesis; thiamine phosphate from 4-amino-2-methyl-5-diphosphomethylpyrimidine and 4-methyl-5-(2-phosphoethyl)-thiazole: step 1/1. Its function is as follows. Condenses 4-methyl-5-(beta-hydroxyethyl)thiazole monophosphate (THZ-P) and 2-methyl-4-amino-5-hydroxymethyl pyrimidine pyrophosphate (HMP-PP) to form thiamine monophosphate (TMP). This is Thiamine-phosphate synthase from Mycolicibacterium paratuberculosis (strain ATCC BAA-968 / K-10) (Mycobacterium paratuberculosis).